We begin with the raw amino-acid sequence, 317 residues long: Ferrochelatase (317 aa).

2 residues coordinate Fe cation: histidine 192 and glutamate 271.

This sequence belongs to the ferrochelatase family.

Its subcellular location is the cytoplasm. The catalysed reaction is heme b + 2 H(+) = protoporphyrin IX + Fe(2+). Its pathway is porphyrin-containing compound metabolism; protoheme biosynthesis; protoheme from protoporphyrin-IX: step 1/1. Its function is as follows. Catalyzes the ferrous insertion into protoporphyrin IX. The polypeptide is Ferrochelatase (Geobacter sp. (strain M21)).